Here is a 245-residue protein sequence, read N- to C-terminus: Endogenous retrovirus group K member 5 Env polyprotein (245 aa).

Residues 1–245 form a truncated surface protein region; that stretch reads MVTPVTWMDN…TLEFGLEIKL (245 aa).

The protein belongs to the beta type-B retroviral envelope protein family. HERV class-II K(HML-2) env subfamily. As to expression, expressed in lung, placenta, testis, peripheral blood lymphocytes, and teratocarcinoma cell lines.

The protein resides in the virion. In terms of biological role, retroviral envelope proteins mediate receptor recognition and membrane fusion during early infection. Endogenous envelope proteins may have kept, lost or modified their original function during evolution. This is Endogenous retrovirus group K member 5 Env polyprotein (ERVK-5) from Homo sapiens (Human).